A 341-amino-acid polypeptide reads, in one-letter code: MRDFHCPNCGQRLAFENSACLSCGSALGFSLGRMALLVIADDADVQLCANLHLAQCNWLVPSDQLGGLCSSCVLTIERPSDTNTAGLAEFARAEGAKRRLIAELHELKLPIVGRDQDPDHGLAFRLLSSAHENVTTGHQNGVITLDLAEGDDVHREQLRVEMDEPYRTLLGHFRHEIGHYYFYRLIASSSDYLSRFNELFGDPDADYSQALDRHYRGGPPEGWQDSFVSSYATMHASEDWAETFAHYLHIRDALDTAAWCGLAPASATFDRPALGPSAFNTIIDKWLPLSWSLNMVNRSMGHDDLYPFVLPAAVLEKMRFIHTVVDEVAPDFEPAHSRRTV.

This is an uncharacterized protein from Mycobacterium bovis (strain ATCC BAA-935 / AF2122/97).